Reading from the N-terminus, the 961-residue chain is Rho guanine nucleotide exchange factor 2 (961 aa).

The Phorbol-ester/DAG-type zinc-finger motif lies at 12–59; that stretch reads GHLFTTISVSGMTMCYACNKSITAKEALICPTCNVTIHNRCKDTLANC. A phosphoserine mark is found at S82, S95, S102, S106, S110, S124, S136, S145, S147, and S150. Residues 104–134 form an interaction with DYNLT1 region; sequence RQSLLGSRRGRSPLSLAKSVSTTNIAGHFND. In terms of domain architecture, DH spans 209–406; sequence KQQDVIYELI…KELLSNVDQD (198 aa). K327 is modified (N6-acetyllysine). The PH domain occupies 446–545; sequence KLIHDGCLLW…WIRVIQQSVR (100 aa). Residues 561–588 are a coiled coil; it reads EAYLRRIKMELQQKDRALVELLQEKVGL. Phosphoserine occurs at positions 619 and 622. Phosphothreonine; by MAPK1 or MAPK3 is present on T653. The disordered stretch occupies residues 659–679; sequence LPVETDSGGNTSPGVTANGEA. Residues S665, S670, S685, and S756 each carry the phosphoserine modification. The span at 742-761 shows a compositional bias: basic and acidic residues; the sequence is PEGPERREKLTRANSRDGEA. The tract at residues 742 to 770 is disordered; sequence PEGPERREKLTRANSRDGEAGRAGAAPVA. Residues 772 to 841 adopt a coiled-coil conformation; the sequence is EKQATELALL…RQLAALGHTE (70 aa). Position 860 is a phosphoserine; by PAK1 and AURKA (S860). The disordered stretch occupies residues 867–961; the sequence is LYLSFTPPQP…RDGEPVASES (95 aa). Phosphotyrosine is present on Y868. Residue S870 is modified to Phosphoserine; by PAK4. The segment covering 894-913 has biased composition (basic and acidic residues); the sequence is RPFEDRERQELGSPDERLQD. S906, S914, and S915 each carry phosphoserine. The segment covering 915 to 925 has biased composition (acidic residues); sequence SDPDTGSEEEG. T919 bears the Phosphothreonine mark. A phosphoserine mark is found at S921, S927, S928, and S931. A Phosphoserine; by CDK1 modification is found at S935.

Found in a complex composed at least of ARHGEF2, NOD2 and RIPK2. Interacts with RIPK2; the interaction mediates tyrosine phosphorylation of RIPK2 by Src kinase CSK. Interacts with RIPK1 and RIPK3. Interacts with YWHAZ/14-3-3 zeta; when phosphorylated at Ser-860. Interacts with the kinases PAK4, AURKA and MAPK1. Interacts with RHOA and RAC1. Interacts with NOD1. Interacts (via the N- terminal zinc finger) with CAPN6 (via domain II). Interacts with DYNLT1. In terms of processing, phosphorylation of Ser-860 by PAK1 induces binding to protein YWHAZ, promoting its relocation to microtubules and the inhibition of its activity. Phosphorylated by AURKA and CDK1 during mitosis, which negatively regulates its activity. Phosphorylation by MAPK1 or MAPK3 increases nucleotide exchange activity. Phosphorylation by PAK4 releases GEF-H1 from the microtubules. Phosphorylated on serine, threonine and tyrosine residues in a RIPK2-dependent manner.

It is found in the cytoplasm. It localises to the cytoskeleton. The protein resides in the cell junction. The protein localises to the tight junction. Its subcellular location is the golgi apparatus. It is found in the spindle. It localises to the cytoplasmic vesicle. Its function is as follows. Activates Rho-GTPases by promoting the exchange of GDP for GTP. May be involved in epithelial barrier permeability, cell motility and polarization, dendritic spine morphology, antigen presentation, leukemic cell differentiation, cell cycle regulation, innate immune response, and cancer. Binds Rac-GTPases, but does not seem to promote nucleotide exchange activity toward Rac-GTPases. May stimulate instead the cortical activity of Rac. Inactive toward CDC42, TC10, or Ras-GTPases. Forms an intracellular sensing system along with NOD1 for the detection of microbial effectors during cell invasion by pathogens. Involved in innate immune signaling transduction pathway promoting cytokine IL6/interleukin-6 and TNF-alpha secretion in macrophage upon stimulation by bacterial peptidoglycans; acts as a signaling intermediate between NOD2 receptor and RIPK2 kinase. Contributes to the tyrosine phosphorylation of RIPK2 through Src tyrosine kinase leading to NF-kappaB activation by NOD2. Overexpression activates Rho-, but not Rac-GTPases, and increases paracellular permeability. Involved in neuronal progenitor cell division and differentiation. Involved in the migration of precerebellar neurons. The protein is Rho guanine nucleotide exchange factor 2 (ARHGEF2) of Sus scrofa (Pig).